We begin with the raw amino-acid sequence, 61 residues long: Conotoxin Am14.1 (61 aa).

2 consecutive propeptides follow at residues methionine 1 to arginine 19 and lysine 52 to glutamine 61.

Mostly non-hydroxylated. In terms of processing, contains 2 disulfide bonds. Expressed by the venom duct.

It localises to the secreted. Its function is as follows. Probable toxin that inhibits ion channels. The sequence is that of Conotoxin Am14.1 from Conus amadis (Amadis cone).